The primary structure comprises 42 residues: Photosystem I reaction center subunit IX (42 aa).

Residues 7-27 form a helical membrane-spanning segment; sequence YLSVAPVLATLWFGSLAGLLI.

The protein belongs to the PsaJ family.

The protein localises to the plastid. It localises to the chloroplast thylakoid membrane. In terms of biological role, may help in the organization of the PsaE and PsaF subunits. This chain is Photosystem I reaction center subunit IX, found in Chloranthus spicatus (Chulantree).